The chain runs to 100 residues: NAD(P)H-quinone oxidoreductase subunit 4L, chloroplastic (100 aa).

A run of 3 helical transmembrane segments spans residues 1–21 (MLEH…YGLI), 31–51 (ICLE…SDFF), and 60–80 (IFAI…LAIL).

This sequence belongs to the complex I subunit 4L family. In terms of assembly, NDH is composed of at least 16 different subunits, 5 of which are encoded in the nucleus.

The protein localises to the plastid. The protein resides in the chloroplast thylakoid membrane. It catalyses the reaction a plastoquinone + NADH + (n+1) H(+)(in) = a plastoquinol + NAD(+) + n H(+)(out). The catalysed reaction is a plastoquinone + NADPH + (n+1) H(+)(in) = a plastoquinol + NADP(+) + n H(+)(out). Its function is as follows. NDH shuttles electrons from NAD(P)H:plastoquinone, via FMN and iron-sulfur (Fe-S) centers, to quinones in the photosynthetic chain and possibly in a chloroplast respiratory chain. The immediate electron acceptor for the enzyme in this species is believed to be plastoquinone. Couples the redox reaction to proton translocation, and thus conserves the redox energy in a proton gradient. The protein is NAD(P)H-quinone oxidoreductase subunit 4L, chloroplastic of Trachelium caeruleum (Blue throatwort).